A 541-amino-acid polypeptide reads, in one-letter code: Periplasmic oligopeptide-binding protein OppA (541 aa).

The signal sequence occupies residues 1–20; sequence MQHKLLFSAIALALSYSAQA.

The protein belongs to the bacterial solute-binding protein 5 family. As to quaternary structure, the complex is composed of two ATP-binding proteins (OppD and OppF), two transmembrane proteins (OppB and OppC) and a solute-binding protein (OppA).

Its subcellular location is the periplasm. Its function is as follows. Part of the ABC transporter complex OppABCDF involved in the uptake of oligopeptides. Plays an important nutritional role. Binds peptides containing from two to five amino acid residues. The protein is Periplasmic oligopeptide-binding protein OppA (oppA) of Haemophilus influenzae (strain ATCC 51907 / DSM 11121 / KW20 / Rd).